A 464-amino-acid chain; its full sequence is MSVEKTNQSWGGRFSEPVDAFVARFTASVDFDKRLYRHDIMGSIAHATMLAKVGVLSDAERDAIVDGLQQIQAEIEAGSFDWRVDLEDVHMNIEARLTDRIGVTGKKLHTGRSRNDQVATDIRLWLRDEIDTILAEITRLQQGLLGLAEAEADTIMPGFTHLQTAQPVTFGHHLLAWFEMLGRDYERLVDCHRRVNRMPLGSAALAGTTYPIQREITCQLLGFEAIGGNSLDGVSDRDFAIEFCAAASLAMMHLSRFSEELVLWTSAQFQFIDLPDRFCTGSSIMPQKKNPDVPELVRGKSGRVFGALTGLLTLMKGQPLAYNKDNQEDKEPLFDAADTLRDSLRAFADMVPAIRPRREVMREAARRGFSTATDLADYLVRKGLPFRDCHEIVGHAVKYGVDSGKDLAEMSLDELRRFSEQIDADVFAVLTLEGSVNARDHIGGTAPNQVRAAVARGRQLLAQR.

The protein belongs to the lyase 1 family. Argininosuccinate lyase subfamily.

The protein resides in the cytoplasm. It carries out the reaction 2-(N(omega)-L-arginino)succinate = fumarate + L-arginine. It functions in the pathway amino-acid biosynthesis; L-arginine biosynthesis; L-arginine from L-ornithine and carbamoyl phosphate: step 3/3. This is Argininosuccinate lyase from Pseudomonas paraeruginosa (strain DSM 24068 / PA7) (Pseudomonas aeruginosa (strain PA7)).